Here is a 373-residue protein sequence, read N- to C-terminus: ORC1-type DNA replication protein 2 (373 aa).

Residues 63 to 67, Y205, and R217 each bind ATP; that span reads TGKTS.

Belongs to the CDC6/cdc18 family.

Involved in regulation of DNA replication. This Methanosarcina mazei (strain ATCC BAA-159 / DSM 3647 / Goe1 / Go1 / JCM 11833 / OCM 88) (Methanosarcina frisia) protein is ORC1-type DNA replication protein 2 (cdc6-2).